The following is a 664-amino-acid chain: Sulfoquinovosidase (664 aa).

Glu135, Glu270, Arg283, Leu284, and Trp286 together coordinate 3-(6-sulfo-alpha-D-quinovosyl)glycerol. Asp388 (nucleophile) is an active-site residue. Residue Glu391 is part of the active site. Residue Arg438 participates in 3-(6-sulfo-alpha-D-quinovosyl)glycerol binding. The Proton donor role is filled by Asp455. His520 contacts 3-(6-sulfo-alpha-D-quinovosyl)glycerol.

The protein belongs to the glycosyl hydrolase 31 family.

The enzyme catalyses 3-(6-sulfo-alpha-D-quinovosyl)glycerol + H2O = 6-sulfo-alpha-D-quinovose + glycerol. Its function is as follows. Part of the sulfoquinovose monooxygenase (sulfo-SMO) pathway, a D-sulfoquinovose degradation pathway that enables the complete utilization of all carbons within sulfoquinovose (SQ) with concomitant production of inorganic sulfite. Catalyzes the first step of the pathway, the hydrolysis of sulfoquinovosyl glycerol (SQGro) to release sulfoquinovose (SQ). Hydrolyzes both epimers of SQGro, with a preference for the natural 2'R isomer. In vitro, can use the substrate analog para-nitrophenyl alpha-sulfoquinovoside (PNPSQ), but shows no detectable activity toward 4-nitrophenyl alpha-D-glucopyranoside (PNPGlc). The sequence is that of Sulfoquinovosidase from Agrobacterium fabrum (strain C58 / ATCC 33970) (Agrobacterium tumefaciens (strain C58)).